Consider the following 262-residue polypeptide: 2-keto-4-pentenoate hydratase (262 aa).

Belongs to the hydratase/decarboxylase family. MhpD subfamily. It depends on a divalent metal cation as a cofactor.

The catalysed reaction is (S)-4-hydroxy-2-oxopentanoate = (2Z)-2-hydroxypenta-2,4-dienoate + H2O. It participates in aromatic compound metabolism; 3-phenylpropanoate degradation. Its function is as follows. Catalyzes the conversion of 2-hydroxypentadienoic acid (enolic form of 2-oxopent-4-enoate) to 4-hydroxy-2-ketopentanoic acid. The sequence is that of 2-keto-4-pentenoate hydratase from Burkholderia vietnamiensis (strain G4 / LMG 22486) (Burkholderia cepacia (strain R1808)).